The chain runs to 444 residues: MSQSYINVIGAGLAGSEAAYQIAERGIPVKLYEMRGVKSTPQHKTDNFAELVCSNSLRGDALTNAVGLLKEEMRRLGSVILESAEATRVPAGGALAVDRDGFSQMVTEKVANHPLIEVVRDEITELPTDVITVIATGPLTSDALAEKIHALNDGAGFYFYDAAAPIIDVNTIDMSKVYLKSRYDKGEAAYLNAPMTKQEFMDFHEALVNAEEAPLSSFEKEKYFEGCMPIEVMAKRGIKTMLYGPMKPVGLEYPDDYTGPRDGEFKTPYAVVQLRQDNAAGSLYNIVGFQTHLKWGEQKRVFQMIPGLENAEFVRYGVMHRNSYMDSPNLLEQTYRSKKQPNLFFAGQMTGVEGYVESAASGLVAGINAARLFKEESEAIFPETTAIGSLAHYITHADSKHFQPMNVNFGIIKELEGERIRDKKARYEKIAERALADLEEFLTV.

10–15 provides a ligand contact to FAD; sequence GAGLAG.

It belongs to the MnmG family. TrmFO subfamily. The cofactor is FAD.

Its subcellular location is the cytoplasm. It catalyses the reaction uridine(54) in tRNA + (6R)-5,10-methylene-5,6,7,8-tetrahydrofolate + NADH + H(+) = 5-methyluridine(54) in tRNA + (6S)-5,6,7,8-tetrahydrofolate + NAD(+). The catalysed reaction is uridine(54) in tRNA + (6R)-5,10-methylene-5,6,7,8-tetrahydrofolate + NADPH + H(+) = 5-methyluridine(54) in tRNA + (6S)-5,6,7,8-tetrahydrofolate + NADP(+). Its function is as follows. Catalyzes the folate-dependent formation of 5-methyl-uridine at position 54 (M-5-U54) in all tRNAs. The sequence is that of Methylenetetrahydrofolate--tRNA-(uracil-5-)-methyltransferase TrmFO from Streptococcus pneumoniae serotype 4 (strain ATCC BAA-334 / TIGR4).